The chain runs to 669 residues: DNA ligase (669 aa).

Residues 33–37, 82–83, and Glu-115 each bind NAD(+); these read DVTYD and SL. Lys-117 (N6-AMP-lysine intermediate) is an active-site residue. Arg-138, Glu-172, Lys-286, and Lys-310 together coordinate NAD(+). The Zn(2+) site is built by Cys-401, Cys-404, Cys-417, and Cys-422. The 81-residue stretch at 589–669 folds into the BRCT domain; that stretch reads IDSSFLFGKK…DIKNLVNLDD (81 aa).

This sequence belongs to the NAD-dependent DNA ligase family. LigA subfamily. The cofactor is Mg(2+). Mn(2+) serves as cofactor.

The enzyme catalyses NAD(+) + (deoxyribonucleotide)n-3'-hydroxyl + 5'-phospho-(deoxyribonucleotide)m = (deoxyribonucleotide)n+m + AMP + beta-nicotinamide D-nucleotide.. In terms of biological role, DNA ligase that catalyzes the formation of phosphodiester linkages between 5'-phosphoryl and 3'-hydroxyl groups in double-stranded DNA using NAD as a coenzyme and as the energy source for the reaction. It is essential for DNA replication and repair of damaged DNA. The polypeptide is DNA ligase (Borrelia recurrentis (strain A1)).